A 376-amino-acid chain; its full sequence is MNIVEIAKNLIKCQSLSPYDAGCNKIIIKCLHNMGFYVEKMKFGKTENIWAYKGTGYTLLFAGHTDVVHAGNVKNWKYPPFSSKLKDGILYGRGSADMKGALAAMLIAAKKFFKSYKEPKGRLAFLITSDEEGSGSNGTKKVINVLLKRKEKIDCCLIGEPTGEKNIGDIVKNGRRGSLSVKIIIYGKQNHVAYAENNNNPIYHSNKIIGELLKTSWNDVQCILPKTTMQIIGIRSNIKKFTNITPSKVEIIINFRFNFKSNKKIIKEKIVSILKKYKYFYDIKCILHSDPFFTKTGNLLKSVIESVKIYQKITPCIINSGGTSDGRFIYKISKQIIELGLLNKTIHKDNEHIKVKDLLILCNIYQYILKKILIKN.

Residue histidine 64 coordinates Zn(2+). Aspartate 66 is a catalytic residue. Aspartate 97 is a Zn(2+) binding site. Catalysis depends on glutamate 131, which acts as the Proton acceptor. Positions 132, 160, and 347 each coordinate Zn(2+).

Belongs to the peptidase M20A family. DapE subfamily. Homodimer. Zn(2+) serves as cofactor. Co(2+) is required as a cofactor.

It catalyses the reaction N-succinyl-(2S,6S)-2,6-diaminopimelate + H2O = (2S,6S)-2,6-diaminopimelate + succinate. It functions in the pathway amino-acid biosynthesis; L-lysine biosynthesis via DAP pathway; LL-2,6-diaminopimelate from (S)-tetrahydrodipicolinate (succinylase route): step 3/3. Functionally, catalyzes the hydrolysis of N-succinyl-L,L-diaminopimelic acid (SDAP), forming succinate and LL-2,6-diaminopimelate (DAP), an intermediate involved in the bacterial biosynthesis of lysine and meso-diaminopimelic acid, an essential component of bacterial cell walls. The chain is Succinyl-diaminopimelate desuccinylase from Wigglesworthia glossinidia brevipalpis.